A 3206-amino-acid polypeptide reads, in one-letter code: Genome polyprotein (3206 aa).

The 143-residue stretch at 255–397 (KMKTESIDVL…WRKMFQIDHF (143 aa)) folds into the Peptidase S30 domain. Active-site for P1 proteinase activity residues include histidine 307, aspartate 316, and serine 348. The short motif at 450–453 (RITC) is the Involved in interaction with stylet and aphid transmission element. Positions 708–710 (PTR) match the Involved in virions binding and aphid transmission motif. A Peptidase C6 domain is found at 734 to 856 (MWIAKEGYCY…LGEMKMYRVG (123 aa)). Residues cysteine 742 and histidine 815 each act as for helper component proteinase activity in the active site. Residues 1338-1490 (IAHTPDFSEY…TQFPVTIATE (153 aa)) enclose the Helicase ATP-binding domain. 1351-1358 (GAVGSGKS) serves as a coordination point for ATP. The DECH box signature appears at 1440-1443 (DECH). The Helicase C-terminal domain occupies 1494 to 1668 (SFDQFVQAQG…GLPVMTSNVS (175 aa)). Positions 1994–2001 (KKGKKSGK) match the Nuclear localization signal motif. Position 2016 is an O-(5'-phospho-RNA)-tyrosine (tyrosine 2016). A Peptidase C4 domain is found at 2150-2368 (AASLHFGLRD…VCWGGLELLD (219 aa)). Active-site for nuclear inclusion protein A activity residues include histidine 2195, aspartate 2230, and cysteine 2300. A RdRp catalytic domain is found at 2637–2761 (WLYCDADGSR…AVRPDCEFVL (125 aa)). The segment at 2900–2979 (HYNDEGGDGS…DRDVDAGSSG (80 aa)) is disordered. Basic and acidic residues-rich tracts occupy residues 2916-2939 (AGDE…REES) and 2949-2974 (RDNK…RDVD).

Belongs to the potyviridae genome polyprotein family. Interacts with host eIF4E protein (via cap-binding region); this interaction mediates the translation of the VPg-viral RNA conjugates. Part of a complex that comprises VPg, RNA, host EIF4E and EIF4G; this interaction mediates the translation of the VPg-viral RNA conjugates. In terms of processing, VPg is uridylylated by the polymerase and is covalently attached to the 5'-end of the genomic RNA. This uridylylated form acts as a nucleotide-peptide primer for the polymerase. Potyviral RNA is expressed as two polyproteins which undergo post-translational proteolytic processing. Genome polyprotein is processed by NIa-pro, P1 and HC-pro proteinases resulting in the production of at least ten individual proteins. P3N-PIPO polyprotein is cleaved by P1 and HC-pro proteinases resulting in the production of three individual proteins. The P1 proteinase and the HC-pro cleave only their respective C-termini autocatalytically. 6K1 is essential for proper proteolytic separation of P3 from CI.

The protein resides in the host cytoplasmic vesicle. Its subcellular location is the host nucleus. It localises to the virion. It catalyses the reaction RNA(n) + a ribonucleoside 5'-triphosphate = RNA(n+1) + diphosphate. The enzyme catalyses Hydrolyzes glutaminyl bonds, and activity is further restricted by preferences for the amino acids in P6 - P1' that vary with the species of potyvirus, e.g. Glu-Xaa-Xaa-Tyr-Xaa-Gln-|-(Ser or Gly) for the enzyme from tobacco etch virus. The natural substrate is the viral polyprotein, but other proteins and oligopeptides containing the appropriate consensus sequence are also cleaved.. The catalysed reaction is Hydrolyzes a Gly-|-Gly bond at its own C-terminus, commonly in the sequence -Tyr-Xaa-Val-Gly-|-Gly, in the processing of the potyviral polyprotein.. Required for aphid transmission and also has proteolytic activity. Only cleaves a Gly-Gly dipeptide at its own C-terminus. Interacts with virions and aphid stylets. Acts as a suppressor of RNA-mediated gene silencing, also known as post-transcriptional gene silencing (PTGS), a mechanism of plant viral defense that limits the accumulation of viral RNAs. May have RNA-binding activity. Functionally, has helicase activity. It may be involved in replication. In terms of biological role, indispensable for virus replication. Its function is as follows. Mediates the cap-independent, EIF4E-dependent translation of viral genomic RNAs. Binds to the cap-binding site of host EIF4E and thus interferes with the host EIF4E-dependent mRNA export and translation. VPg-RNA directly binds EIF4E and is a template for transcription. Also forms trimeric complexes with EIF4E-EIF4G, which are templates for translation. Has RNA-binding and proteolytic activities. Functionally, an RNA-dependent RNA polymerase that plays an essential role in the virus replication. In terms of biological role, involved in aphid transmission, cell-to-cell and systemis movement, encapsidation of the viral RNA and in the regulation of viral RNA amplification. The sequence is that of Genome polyprotein from Pisum sativum (Garden pea).